The chain runs to 55 residues: Spermatid nuclear transition protein 1 (55 aa).

Residues 1 to 42 (MSTSRKLKSHGMRRSKSRSPHKGVKRGGSKRKYRKGNLKSRK) are compositionally biased toward basic residues. The interval 1 to 55 (MSTSRKLKSHGMRRSKSRSPHKGVKRGGSKRKYRKGNLKSRKRGDDANRNYRSHL) is disordered. Residues serine 9 and serine 40 each carry the phosphoserine modification.

This sequence belongs to the nuclear transition protein 1 family. Expressed by spermatids (at protein level).

The protein localises to the nucleus. The protein resides in the chromosome. Functionally, plays a key role in the replacement of histones to protamine in the elongating spermatids of mammals. In condensing spermatids, loaded onto the nucleosomes, where it promotes the recruitment and processing of protamines, which are responsible for histone eviction. The protein is Spermatid nuclear transition protein 1 (TNP1) of Homo sapiens (Human).